Here is a 79-residue protein sequence, read N- to C-terminus: UPF0291 protein lp_2062 (79 aa).

The protein belongs to the UPF0291 family.

It localises to the cytoplasm. The chain is UPF0291 protein lp_2062 from Lactiplantibacillus plantarum (strain ATCC BAA-793 / NCIMB 8826 / WCFS1) (Lactobacillus plantarum).